The primary structure comprises 201 residues: Ribonuclease HII (201 aa).

Residues 12–201 enclose the RNase H type-2 domain; it reads GIVCGIDEVG…FAPVAQYMLF (190 aa). A divalent metal cation contacts are provided by Asp18, Glu19, and Asp113.

It belongs to the RNase HII family. The cofactor is Mn(2+). It depends on Mg(2+) as a cofactor.

It is found in the cytoplasm. The enzyme catalyses Endonucleolytic cleavage to 5'-phosphomonoester.. In terms of biological role, endonuclease that specifically degrades the RNA of RNA-DNA hybrids. In Paramagnetospirillum magneticum (strain ATCC 700264 / AMB-1) (Magnetospirillum magneticum), this protein is Ribonuclease HII (rnhB).